The chain runs to 134 residues: Large ribosomal subunit protein bL20 (134 aa).

Belongs to the bacterial ribosomal protein bL20 family.

Functionally, binds directly to 23S ribosomal RNA and is necessary for the in vitro assembly process of the 50S ribosomal subunit. It is not involved in the protein synthesizing functions of that subunit. The polypeptide is Large ribosomal subunit protein bL20 (Rhizobium etli (strain CIAT 652)).